Here is a 429-residue protein sequence, read N- to C-terminus: MMVDTGVDHRAVSSHDGPDAGRRVFGAADPRFACVVRAFASMFPGRRFGGGALAVYLDGQPVVDVWKGWADRAGWVPWSADSAPMVFSATKGMTATVIHRLADRGLIDYEAPVAEYWPAFGANGKATLTVRDVMRHQAGLSGLRGATQQDLLDHVVMEERLAAAVPGRLLGKSAYHALTFGWLMSGLARAVTGKDMRLLFREELAEPLDTDGLHLGRPPADAPTRVAEIIMPQDIAANAVLTCAMRRLAHRFSGGFRSMYFPGAIAAVQGEAPLLDAEIPAANGVATARALARMYGAIANGGEIDGIRFLSRELVTGLTRNRRQVLPDRNLLVPLNFHLGYHGMPIGNVMPGFGHVGLGGSIGWTDPETGVAFALVHNRLLSPLVMTDHAGFVGIYHLIRQAAAQARKRGYQPVTPFGAPYSEPGAAAG.

Serine 88 (acyl-ester intermediate) is an active-site residue.

It belongs to the beta-lactamase family.

Its subcellular location is the secreted. It localises to the cell wall. The protein localises to the cell membrane. The catalysed reaction is a fatty acid ester + H2O = an aliphatic alcohol + a fatty acid + H(+). It carries out the reaction an acetyl ester + H2O = an aliphatic alcohol + acetate + H(+). It catalyses the reaction a butanoate ester + H2O = an aliphatic alcohol + butanoate + H(+). The enzyme catalyses an octanoate ester + H2O = an aliphatic alcohol + octanoate + H(+). The catalysed reaction is decanoate ester + H2O = decanoate + an aliphatic alcohol + H(+). It carries out the reaction a dodecanoate ester + H2O = an aliphatic alcohol + dodecanoate + H(+). It catalyses the reaction a tetradecanoate ester + H2O = an aliphatic alcohol + tetradecanoate + H(+). The enzyme catalyses hexadecanoate ester + H2O = an aliphatic alcohol + hexadecanoate + H(+). The catalysed reaction is octadecanoate ester + H2O = an aliphatic alcohol + octadecanoate + H(+). It carries out the reaction a hexanoate ester + H2O = an aliphatic alcohol + hexanoate + H(+). It catalyses the reaction a beta-lactam + H2O = a substituted beta-amino acid. With respect to regulation, esterase and beta-lactamase activities are inhibited by the active site residue modifiers phenylmethanesulfonylflouride (PMSF) and diethylpyrocarbonate (DEPC). Its function is as follows. Shows both esterase and beta-lactamase activities, with a much higher activity against phenyl esters than against beta-lactams. Shows esterase activity against both long-chain and short-chain p-nitrophenol (pNP) esters, with a preference for shorter chain esters. Hydrolyzes substrates containing beta-lactam ring such as nitrocefin and ampicillin. Functions as an immunogen that activates both humoral and cell-mediated responses. The sequence is that of Esterase/beta-lactamase LipL from Mycobacterium tuberculosis (strain ATCC 25618 / H37Rv).